The primary structure comprises 353 residues: Photosystem II D2 protein (353 aa).

T2 is modified (N-acetylthreonine). Residue T2 is modified to Phosphothreonine. A helical membrane pass occupies residues 41–61; sequence CAYFAVGGWFTGTTFVTSWYT. Chlorophyll a is bound at residue H118. The helical transmembrane segment at 125–141 threads the bilayer; sequence GFMLRQFELARSVQLRP. Positions 130 and 143 each coordinate pheophytin a. Residues 153-166 traverse the membrane as a helical segment; sequence VFVSVFLIYPLGQS. H198 serves as a coordination point for chlorophyll a. Residues 208–228 form a helical membrane-spanning segment; the sequence is AALLCAIHGATVENTLFEDGD. 2 residues coordinate a plastoquinone: H215 and F262. H215 serves as a coordination point for Fe cation. H269 provides a ligand contact to Fe cation. The chain crosses the membrane as a helical span at residues 279–295; it reads GLWMSALGVVGLALNLR.

It belongs to the reaction center PufL/M/PsbA/D family. PSII is composed of 1 copy each of membrane proteins PsbA, PsbB, PsbC, PsbD, PsbE, PsbF, PsbH, PsbI, PsbJ, PsbK, PsbL, PsbM, PsbT, PsbX, PsbY, PsbZ, Psb30/Ycf12, at least 3 peripheral proteins of the oxygen-evolving complex and a large number of cofactors. It forms dimeric complexes. The cofactor is The D1/D2 heterodimer binds P680, chlorophylls that are the primary electron donor of PSII, and subsequent electron acceptors. It shares a non-heme iron and each subunit binds pheophytin, quinone, additional chlorophylls, carotenoids and lipids. There is also a Cl(-1) ion associated with D1 and D2, which is required for oxygen evolution. The PSII complex binds additional chlorophylls, carotenoids and specific lipids..

Its subcellular location is the plastid. It localises to the chloroplast thylakoid membrane. It catalyses the reaction 2 a plastoquinone + 4 hnu + 2 H2O = 2 a plastoquinol + O2. Photosystem II (PSII) is a light-driven water:plastoquinone oxidoreductase that uses light energy to abstract electrons from H(2)O, generating O(2) and a proton gradient subsequently used for ATP formation. It consists of a core antenna complex that captures photons, and an electron transfer chain that converts photonic excitation into a charge separation. The D1/D2 (PsbA/PsbD) reaction center heterodimer binds P680, the primary electron donor of PSII as well as several subsequent electron acceptors. D2 is needed for assembly of a stable PSII complex. This chain is Photosystem II D2 protein, found in Cucumis sativus (Cucumber).